We begin with the raw amino-acid sequence, 203 residues long: Glycerol-3-phosphate acyltransferase (203 aa).

4 helical membrane passes run 4 to 24, 68 to 88, 117 to 137, and 155 to 175; these read LALI…AVLI, IPVW…VIAI, PIGL…AVLF, and TWMF…LIVF.

Belongs to the PlsY family. Probably interacts with PlsX.

Its subcellular location is the cell inner membrane. The enzyme catalyses an acyl phosphate + sn-glycerol 3-phosphate = a 1-acyl-sn-glycero-3-phosphate + phosphate. Its pathway is lipid metabolism; phospholipid metabolism. Functionally, catalyzes the transfer of an acyl group from acyl-phosphate (acyl-PO(4)) to glycerol-3-phosphate (G3P) to form lysophosphatidic acid (LPA). This enzyme utilizes acyl-phosphate as fatty acyl donor, but not acyl-CoA or acyl-ACP. The polypeptide is Glycerol-3-phosphate acyltransferase (Vibrio campbellii (strain ATCC BAA-1116)).